The sequence spans 469 residues: MNKGRVTQIMGPVVDVKFDGGKLPEIYNALTVKQSNENGTSINLTFEVALHLGDDTVRTVAMSSTDGLVRGTEVEDTGKAISVPVGDATLGRVFNVLGDAIDLDGEVPADVRRDPIHRQAPAFEELSTKVEILETGIKVVDLLAPYIKGGKIGLFGGAGVGKTVLIQELINNIAQEHGGISVFAGVGERTREGNDLYHEMSDSGVIKKTAMVFGQMNEPPGARQRVALTGLTMAEHFRDEQGQDVLLFIDNIFRFTQAGSEVSALLGRMPSAVGYQPTLATEMGQLQERITSTNKGSITSIQAVYVPADDYTDPAPATTFAHLDATTNLERRLTQMGIYPAVDPLASTSRALSPEIVGEEHYEVARQVQQTLQRYKELQDIIAILGMDELSEEDKLVVHRARRIQFFLSQNFHVAEQFTGQKGSYVPVKETVRGFKEILEGKYDDLPEDAFRLVGGIEEVIENAKKMMA.

Glycine 156–threonine 163 is an ATP binding site.

Belongs to the ATPase alpha/beta chains family. F-type ATPases have 2 components, CF(1) - the catalytic core - and CF(0) - the membrane proton channel. CF(1) has five subunits: alpha(3), beta(3), gamma(1), delta(1), epsilon(1). CF(0) has three main subunits: a(1), b(2) and c(9-12). The alpha and beta chains form an alternating ring which encloses part of the gamma chain. CF(1) is attached to CF(0) by a central stalk formed by the gamma and epsilon chains, while a peripheral stalk is formed by the delta and b chains.

It localises to the cell membrane. The enzyme catalyses ATP + H2O + 4 H(+)(in) = ADP + phosphate + 5 H(+)(out). Functionally, produces ATP from ADP in the presence of a proton gradient across the membrane. The catalytic sites are hosted primarily by the beta subunits. The sequence is that of ATP synthase subunit beta from Bacillus anthracis (strain CDC 684 / NRRL 3495).